We begin with the raw amino-acid sequence, 76 residues long: Exodeoxyribonuclease 7 small subunit (76 aa).

It belongs to the XseB family. Heterooligomer composed of large and small subunits.

The protein localises to the cytoplasm. It carries out the reaction Exonucleolytic cleavage in either 5'- to 3'- or 3'- to 5'-direction to yield nucleoside 5'-phosphates.. Its function is as follows. Bidirectionally degrades single-stranded DNA into large acid-insoluble oligonucleotides, which are then degraded further into small acid-soluble oligonucleotides. The sequence is that of Exodeoxyribonuclease 7 small subunit from Bacillus cereus (strain G9842).